A 130-amino-acid chain; its full sequence is Small ribosomal subunit protein eS8 (130 aa).

This sequence belongs to the eukaryotic ribosomal protein eS8 family. Part of the 30S ribosomal subunit.

The chain is Small ribosomal subunit protein eS8 from Thermococcus onnurineus (strain NA1).